Consider the following 204-residue polypeptide: uncharacterized protein (204 aa).

A signal peptide spans 1–17 (MKRLVTGLLALSLFLAA). The tract at residues 17-102 (ACGQDSDQQK…NQSSNNQKSS (86 aa)) is disordered. Residue Cys18 is the site of N-palmitoyl cysteine attachment. Cys18 carries S-diacylglycerol cysteine lipidation. A compositionally biased stretch (basic and acidic residues) spans 23–70 (DQQKDSNKEKDDKAKTEQQDKKTNDSSKDKKDNKDDSKDVNKDNKDNS). Low complexity predominate over residues 71-102 (ANDNQQQSNSNATNNDQNQTNNNQSSNNQKSS).

It localises to the cell membrane. This is an uncharacterized protein from Staphylococcus aureus (strain Mu50 / ATCC 700699).